A 1202-amino-acid chain; its full sequence is DNA-directed RNA polymerase subunit beta (1202 aa).

The span at 1151–1162 (LRDMDEEDDDVV) shows a compositional bias: acidic residues. The disordered stretch occupies residues 1151-1202 (LRDMDEEDDDVVNVDALSKYAEKQNEKTNASAEEAKAPSTESAPVETKNNQN). Positions 1189–1202 (STESAPVETKNNQN) are enriched in polar residues.

The protein belongs to the RNA polymerase beta chain family. As to quaternary structure, the RNAP catalytic core consists of 2 alpha, 1 beta, 1 beta' and 1 omega subunit. When a sigma factor is associated with the core the holoenzyme is formed, which can initiate transcription.

The enzyme catalyses RNA(n) + a ribonucleoside 5'-triphosphate = RNA(n+1) + diphosphate. Its function is as follows. DNA-dependent RNA polymerase catalyzes the transcription of DNA into RNA using the four ribonucleoside triphosphates as substrates. The sequence is that of DNA-directed RNA polymerase subunit beta from Pediococcus pentosaceus (strain ATCC 25745 / CCUG 21536 / LMG 10740 / 183-1w).